Here is a 278-residue protein sequence, read N- to C-terminus: tRNA pseudouridine synthase A (278 aa).

Catalysis depends on Asp-61, which acts as the Nucleophile. Substrate is bound at residue Tyr-119.

Belongs to the tRNA pseudouridine synthase TruA family. Homodimer.

The catalysed reaction is uridine(38/39/40) in tRNA = pseudouridine(38/39/40) in tRNA. Its function is as follows. Formation of pseudouridine at positions 38, 39 and 40 in the anticodon stem and loop of transfer RNAs. This is tRNA pseudouridine synthase A from Oleidesulfovibrio alaskensis (strain ATCC BAA-1058 / DSM 17464 / G20) (Desulfovibrio alaskensis).